Consider the following 311-residue polypeptide: MYRLLAPAKINLFLQIIGNCLDGSGYHELVMVMQAVSLMDRLELIPRRDREIKVHCTNPAVPCDQRNLAYKAAALLQQHFPDRDGVEIFIEKRIPLGAGLAGGSTNAAAVLVGLDLLWQLGLTQGELQTLAAQLGADVPFCLQGGTALALGRGEQLTPLADLQGLTVILGKYRSLSVATPWAYQTYRQEFAATYAQTPSEQEKARQEGGSAILLQAIQQHDIAPLAANLRNDLEKVVLPRYPLVAELKEQFLAAGAIASMMSGSGPTVFALAPSADEGYRIMQRVRRALPDPDLDLWVCECCPHGIQLETS.

Lys9 is an active-site residue. 95 to 105 (PLGAGLAGGST) is a binding site for ATP. Residue Asp137 is part of the active site.

This sequence belongs to the GHMP kinase family. IspE subfamily.

It catalyses the reaction 4-CDP-2-C-methyl-D-erythritol + ATP = 4-CDP-2-C-methyl-D-erythritol 2-phosphate + ADP + H(+). It participates in isoprenoid biosynthesis; isopentenyl diphosphate biosynthesis via DXP pathway; isopentenyl diphosphate from 1-deoxy-D-xylulose 5-phosphate: step 3/6. Its function is as follows. Catalyzes the phosphorylation of the position 2 hydroxy group of 4-diphosphocytidyl-2C-methyl-D-erythritol. This Thermosynechococcus vestitus (strain NIES-2133 / IAM M-273 / BP-1) protein is 4-diphosphocytidyl-2-C-methyl-D-erythritol kinase.